The chain runs to 88 residues: Cuticle protein 70, isoforms A and B (88 aa).

A run of 5 repeats spans residues 7-10, 48-51, 55-58, 60-63, and 66-69.

Its function is as follows. Component of the cuticle of migratory locust which contains more than 100 different structural proteins. The sequence is that of Cuticle protein 70, isoforms A and B from Locusta migratoria (Migratory locust).